A 377-amino-acid polypeptide reads, in one-letter code: Alanine racemase (377 aa).

Residue Lys-37 is the Proton acceptor; specific for D-alanine of the active site. Lys-37 is subject to N6-(pyridoxal phosphate)lysine. Arg-135 contacts substrate. Catalysis depends on Tyr-271, which acts as the Proton acceptor; specific for L-alanine. Met-319 contributes to the substrate binding site.

This sequence belongs to the alanine racemase family. It depends on pyridoxal 5'-phosphate as a cofactor.

The catalysed reaction is L-alanine = D-alanine. It functions in the pathway amino-acid biosynthesis; D-alanine biosynthesis; D-alanine from L-alanine: step 1/1. Its function is as follows. Catalyzes the interconversion of L-alanine and D-alanine. May also act on other amino acids. The sequence is that of Alanine racemase (alr) from Helicobacter pylori (strain Shi470).